The chain runs to 100 residues: uncharacterized protein (100 aa).

Residues 1-100 (MEPIEVFKAL…KLADFLKTEI (100 aa)) form the HTH arsR-type domain. Residues 44–67 (VSQITDKLKMTQSTASQYLTILLR) constitute a DNA-binding region (H-T-H motif).

This is an uncharacterized protein from Bacillus subtilis (strain 168).